Here is a 133-residue protein sequence, read N- to C-terminus: Beta-synuclein (133 aa).

A run of 2 repeats spans residues 20–30 and 31–41. Residues 20–66 are 4 X 11 AA tandem repeats of [EGS]-K-T-K-[EQ]-[GQ]-V-X(4); that stretch reads EKTKQGVTEAAEKTKEGVLYVGSKTSGVVQGVASVAEKTKEQASHLG. One copy of the 3; approximate repeat lies at 42-55; the sequence is SKTSGVVQGVASVA. A Phosphoserine modification is found at Ser-45. Residues 56–66 form repeat 4; that stretch reads EKTKEQASHLG. Residues 96–133 form a disordered region; it reads EVAQEAAEEPLIEPLMEPEGESYEDSPQEEYQEYEPEA. Residues 97 to 133 show a composition bias toward acidic residues; sequence VAQEAAEEPLIEPLMEPEGESYEDSPQEEYQEYEPEA. Ser-117 is subject to Phosphoserine; by BARK1, CK2 and GRK5.

Belongs to the synuclein family. Post-translationally, phosphorylated. Phosphorylation by G-protein coupled receptor kinases (GRK) is more efficient than phosphorylation by CK1, CK2 and CaM-kinase II. As to expression, highly expressed in the brain.

Its subcellular location is the cytoplasm. Functionally, may be involved in neuronal plasticity. The sequence is that of Beta-synuclein (Sncb) from Mus musculus (Mouse).